Consider the following 272-residue polypeptide: tRNA pseudouridine synthase B (272 aa).

Residue D38 is the Nucleophile of the active site.

Belongs to the pseudouridine synthase TruB family. Type 1 subfamily.

The enzyme catalyses uridine(55) in tRNA = pseudouridine(55) in tRNA. Responsible for synthesis of pseudouridine from uracil-55 in the psi GC loop of transfer RNAs. This is tRNA pseudouridine synthase B from Campylobacter jejuni subsp. jejuni serotype O:23/36 (strain 81-176).